Consider the following 1001-residue polypeptide: Phosphatidylinositol 4,5-bisphosphate 5-phosphatase A (1001 aa).

Positions 1 to 12 (MEGQSRSGSAKS) are enriched in polar residues. Disordered regions lie at residues 1-130 (MEGQ…VASV) and 144-412 (SASA…QPTC). The short motif at 6–11 (RSGSAK) is the RSXSXX motif 1 element. The span at 13–28 (GTRTGLGPLPGTHGAL) shows a compositional bias: low complexity. Residues 29-42 (QTGTPSKKVNSSFQ) are compositionally biased toward polar residues. Asymmetric dimethylarginine; alternate is present on Arg56. Arg56 carries the post-translational modification Omega-N-methylarginine; alternate. Arg65 is subject to Omega-N-methylarginine. Arg76 is subject to Asymmetric dimethylarginine. At Arg83 the chain carries Asymmetric dimethylarginine; alternate. Position 83 is an omega-N-methylarginine; alternate (Arg83). A compositionally biased stretch (polar residues) spans 161 to 174 (SPTSRDQKQLSPTS). Position 171 is a phosphoserine (Ser171). Over residues 180-196 (ALATSGLSLALASQEQP) the composition is skewed to low complexity. Residues 197–210 (PQSPSSPSPVPSPV) show a composition bias toward pro residues. Residues 284 to 294 (ARPEAPRHSPE) are compositionally biased toward basic and acidic residues. 2 positions are modified to phosphoserine: Ser292 and Ser325. The span at 338 to 348 (VPPPLPKPPRS) shows a compositional bias: pro residues. Residues 346-351 (PRSPSR) carry the SH3-binding motif. Composition is skewed to low complexity over residues 349-361 (PSRS…NRSP) and 394-411 (SPVA…AQPT). The short motif at 351–356 (RSPSRS) is the RSXSXX motif 2 element. The tract at residues 420–723 (ITVVTWNVGT…SDHKPVAARF (304 aa)) is catalytic. Positions 724-835 (LLQFAFRDDV…IGVTEPFQIS (112 aa)) are required for ruffle localization. The tract at residues 837 to 1001 (PTSESASSST…LGLEDGGLGP (165 aa)) is disordered. Residues 838–853 (TSESASSSTDSSGTSS) show a composition bias toward low complexity. 2 short sequence motifs (RSXSXX motif) span residues 869 to 874 (RSPSPG) and 880 to 885 (RSRSPG). The residue at position 898 (Ser898) is a Phosphoserine. 2 stretches are compositionally biased toward low complexity: residues 905–917 (SRSP…QLPR) and 925–936 (SSGSRGSSEEGP). Residues 906–911 (RSPSPQ) carry the RSXSXX motif 5 motif. The segment covering 937–949 (SGPPGPWAFPPAV) has biased composition (pro residues). At Ser985 the chain carries Phosphoserine.

This sequence belongs to the inositol 1,4,5-trisphosphate 5-phosphatase type II family. Phosphorylated on Ser/Thr residues. In terms of tissue distribution, expressed in heart, brain, kidney, stomach, small intestine and lung. Not expressed in spleen, thymus, skeletal muscle, testis and skin.

The protein resides in the cytoplasm. The enzyme catalyses 1D-myo-inositol 1,4,5-trisphosphate + H2O = 1D-myo-inositol 1,4-bisphosphate + phosphate. The catalysed reaction is 1D-myo-inositol 1,3,4,5-tetrakisphosphate + H2O = 1D-myo-inositol 1,3,4-trisphosphate + phosphate. It catalyses the reaction a 1,2-diacyl-sn-glycero-3-phospho-(1D-myo-inositol-4,5-bisphosphate) + H2O = a 1,2-diacyl-sn-glycero-3-phospho-(1D-myo-inositol 4-phosphate) + phosphate. Its function is as follows. Inositol 5-phosphatase, which converts inositol 1,4,5-trisphosphate to inositol 1,4-bisphosphate. Also converts phosphatidylinositol 4,5-bisphosphate to phosphatidylinositol 4-phosphate and inositol 1,3,4,5-tetrakisphosphate to inositol 1,3,4-trisphosphate in vitro. May be involved in modulation of the function of inositol and phosphatidylinositol polyphosphate-binding proteins that are present at membranes ruffles. This is Phosphatidylinositol 4,5-bisphosphate 5-phosphatase A (Inpp5j) from Rattus norvegicus (Rat).